Reading from the N-terminus, the 170-residue chain is Small ribosomal subunit protein uS5 (170 aa).

Residues 16–79 (IEDQLVAINR…EAGKKNMISV (64 aa)) enclose the S5 DRBM domain.

The protein belongs to the universal ribosomal protein uS5 family. As to quaternary structure, part of the 30S ribosomal subunit. Contacts proteins S4 and S8.

In terms of biological role, with S4 and S12 plays an important role in translational accuracy. Located at the back of the 30S subunit body where it stabilizes the conformation of the head with respect to the body. In Lactobacillus delbrueckii subsp. bulgaricus (strain ATCC 11842 / DSM 20081 / BCRC 10696 / JCM 1002 / NBRC 13953 / NCIMB 11778 / NCTC 12712 / WDCM 00102 / Lb 14), this protein is Small ribosomal subunit protein uS5.